The following is a 432-amino-acid chain: Phosphomevalonate kinase (432 aa).

Residues Lys-10 and Val-142–Gly-148 each bind ATP.

This sequence belongs to the GHMP kinase family. Mevalonate kinase subfamily.

It is found in the cytoplasm. The catalysed reaction is (R)-5-phosphomevalonate + ATP = (R)-5-diphosphomevalonate + ADP. It functions in the pathway isoprenoid biosynthesis; isopentenyl diphosphate biosynthesis via mevalonate pathway; isopentenyl diphosphate from (R)-mevalonate: step 2/3. Functionally, phosphomevalonate kinase; part of the second module of ergosterol biosynthesis pathway that includes the middle steps of the pathway. ERG8 converts 5-phosphomevalonate to 5-diphosphomevalonate. The second module is carried out in the vacuole and involves the formation of farnesyl diphosphate, which is also an important intermediate in the biosynthesis of ubiquinone, dolichol, heme and prenylated proteins. Activity by the mevalonate kinase ERG12 first converts mevalonate into 5-phosphomevalonate. 5-phosphomevalonate is then further converted to 5-diphosphomevalonate by the phosphomevalonate kinase ERG8. The diphosphomevalonate decarboxylase MVD then produces isopentenyl diphosphate. The isopentenyl-diphosphate delta-isomerase IDI1 then catalyzes the 1,3-allylic rearrangement of the homoallylic substrate isopentenyl (IPP) to its highly electrophilic allylic isomer, dimethylallyl diphosphate (DMAPP). Finally the farnesyl diphosphate synthase ERG20 catalyzes the sequential condensation of isopentenyl pyrophosphate with dimethylallyl pyrophosphate, and then with the resultant geranylpyrophosphate to the ultimate product farnesyl pyrophosphate. The polypeptide is Phosphomevalonate kinase (Candida albicans (strain SC5314 / ATCC MYA-2876) (Yeast)).